The chain runs to 624 residues: Phosphomethylpyrimidine synthase (624 aa).

The interval 75-99 (SPWIESRGDTESYTGRTPFALDDGL) is disordered. Residues Asn-226, Met-255, Tyr-284, His-320, 340-342 (SRG), 381-384 (DGLR), and Glu-420 contribute to the substrate site. His-424 contacts Zn(2+). Substrate is bound at residue Tyr-447. His-488 provides a ligand contact to Zn(2+). 3 residues coordinate [4Fe-4S] cluster: Cys-568, Cys-571, and Cys-576.

Belongs to the ThiC family. As to quaternary structure, homodimer. [4Fe-4S] cluster serves as cofactor.

It carries out the reaction 5-amino-1-(5-phospho-beta-D-ribosyl)imidazole + S-adenosyl-L-methionine = 4-amino-2-methyl-5-(phosphooxymethyl)pyrimidine + CO + 5'-deoxyadenosine + formate + L-methionine + 3 H(+). It functions in the pathway cofactor biosynthesis; thiamine diphosphate biosynthesis. Functionally, catalyzes the synthesis of the hydroxymethylpyrimidine phosphate (HMP-P) moiety of thiamine from aminoimidazole ribotide (AIR) in a radical S-adenosyl-L-methionine (SAM)-dependent reaction. The protein is Phosphomethylpyrimidine synthase of Albidiferax ferrireducens (strain ATCC BAA-621 / DSM 15236 / T118) (Rhodoferax ferrireducens).